Consider the following 333-residue polypeptide: Aquaporin-1 (333 aa).

Residues 1–26 (MQKMSEKPLYRAAENPTRNADRRAGR) are disordered. The next 2 membrane-spanning stretches (helical) occupy residues 85–105 (LAMF…HFTG) and 116–136 (FHGF…GGII). Residues 137–139 (NPA) carry the NPA 1 motif. The next 3 membrane-spanning stretches (helical) occupy residues 156–176 (LVLV…VYLI), 213–233 (TGAI…FLSI), and 245–265 (LFPF…SYSA). The short motif at 270 to 272 (NPA) is the NPA 2 element. A helical membrane pass occupies residues 303–323 (WLFPYVGALFGAVMYQIFVGV).

The protein belongs to the MIP/aquaporin (TC 1.A.8) family.

It is found in the cell membrane. Functionally, aquaglyceroporin that may modulate the water content and osmolytes during anhydrobiosis. This is Aquaporin-1 from Milnesium tardigradum (Water bear).